Consider the following 119-residue polypeptide: Large ribosomal subunit protein bL20c (119 aa).

Belongs to the bacterial ribosomal protein bL20 family.

Its subcellular location is the plastid. The protein resides in the chloroplast. Binds directly to 23S ribosomal RNA and is necessary for the in vitro assembly process of the 50S ribosomal subunit. It is not involved in the protein synthesizing functions of that subunit. This is Large ribosomal subunit protein bL20c from Oedogonium cardiacum (Filamentous green alga).